The primary structure comprises 288 residues: Homeobox protein Hox-B4a (288 aa).

The interval 10–136 is disordered; that stretch reads SNYVDPKFPP…ASSPASTRKD (127 aa). The span at 118 to 132 shows a compositional bias: polar residues; that stretch reads CGQTPHSQGASSPAS. Residues 139 to 144 carry the Antp-type hexapeptide motif; sequence VYPWMK. Residues 160–219 constitute a DNA-binding region (homeobox); the sequence is PKRSRTAYTRQQVLELEKEFHYNRYLTRRRRVEIAHTLCLSERQIKIWFQNRRMKWKKDH.

Belongs to the Antp homeobox family. Deformed subfamily.

The protein localises to the nucleus. Functionally, sequence-specific transcription factor which is part of a developmental regulatory system that provides cells with specific positional identities on the anterior-posterior axis. This Takifugu rubripes (Japanese pufferfish) protein is Homeobox protein Hox-B4a (hoxb4a).